Reading from the N-terminus, the 490-residue chain is Glutamate--tRNA ligase (490 aa).

The 'HIGH' region signature appears at P10–N20. Zn(2+) is bound by residues C109, C111, C140, and H142. A 'KMSKS' region motif is present at residues K257 to R261. K260 contacts ATP.

It belongs to the class-I aminoacyl-tRNA synthetase family. Glutamate--tRNA ligase type 1 subfamily. In terms of assembly, monomer. It depends on Zn(2+) as a cofactor.

The protein resides in the cytoplasm. It catalyses the reaction tRNA(Glu) + L-glutamate + ATP = L-glutamyl-tRNA(Glu) + AMP + diphosphate. Functionally, catalyzes the attachment of glutamate to tRNA(Glu) in a two-step reaction: glutamate is first activated by ATP to form Glu-AMP and then transferred to the acceptor end of tRNA(Glu). This chain is Glutamate--tRNA ligase, found in Lachnoclostridium phytofermentans (strain ATCC 700394 / DSM 18823 / ISDg) (Clostridium phytofermentans).